Here is a 238-residue protein sequence, read N- to C-terminus: MEQQQERPREVYRECMRNHAAKLGTYANDGCCEYTPDDGHPAGLLCAACGCHRNFHRKDFLDGRATAAAGGAGGAGVGVAPMLPAPGGGGPPGYMHMAAMGGAVGGGGGVDGGGGSGGRRRTRTKFTEEQKARMLRFAERLGWRMPKREPGRAPGDDEVARFCREIGVNRQVFKVWMHNHKAGGGGGGGGSGGPGAGGGAQTSSSTTRGGGDVGVGLSPAMGGDGEDDEEVRGSEMCM.

Residues 12–59 form a ZF-HD dimerization-type; degenerate zinc finger; sequence YRECMRNHAAKLGTYANDGCCEYTPDDGHPAGLLCAACGCHRNFHRKD. The segment at residues 119-188 is a DNA-binding region (homeobox); that stretch reads RRRTRTKFTE…NHKAGGGGGG (70 aa). Gly residues predominate over residues 183–200; it reads GGGGGGGGSGGPGAGGGA. The disordered stretch occupies residues 183 to 238; it reads GGGGGGGGSGGPGAGGGAQTSSSTTRGGGDVGVGLSPAMGGDGEDDEEVRGSEMCM.

As to quaternary structure, homo- and heterodimer with other ZFHD proteins.

Its subcellular location is the nucleus. Functionally, putative transcription factor. The sequence is that of Zinc-finger homeodomain protein 11 (ZHD11) from Oryza sativa subsp. indica (Rice).